The primary structure comprises 213 residues: Guanylate kinase (213 aa).

One can recognise a Guanylate kinase-like domain in the interval 10 to 189 (GLLLMVVAPS…AYADLAHIYH (180 aa)). 17–24 (APSGVGKT) serves as a coordination point for ATP.

It belongs to the guanylate kinase family.

Its subcellular location is the cytoplasm. It catalyses the reaction GMP + ATP = GDP + ADP. Functionally, essential for recycling GMP and indirectly, cGMP. The sequence is that of Guanylate kinase (gmk) from Caulobacter vibrioides (strain ATCC 19089 / CIP 103742 / CB 15) (Caulobacter crescentus).